Consider the following 949-residue polypeptide: AP-1 complex subunit beta-1 (949 aa).

At Lys-318 the chain carries N6-acetyllysine. Tyr-574 carries the 3'-nitrotyrosine modification. Residues Ser-592–Pro-623 are disordered. Positions Pro-594–Ser-616 are enriched in low complexity.

Belongs to the adaptor complexes large subunit family. In terms of assembly, adaptor protein complex 1 (AP-1) is a heterotetramer composed of two large adaptins (gamma-type subunit AP1G1 and beta-type subunit AP1B1), a medium adaptin (mu-type subunit AP1M1 or AP1M2) and a small adaptin (sigma-type subunit AP1S1 or AP1S2 or AP1S3). The N-terminus is blocked.

It localises to the golgi apparatus. The protein localises to the cytoplasmic vesicle. It is found in the clathrin-coated vesicle membrane. In terms of biological role, subunit of clathrin-associated adaptor protein complex 1 that plays a role in protein sorting in the late-Golgi/trans-Golgi network (TGN) and/or endosomes. The AP complexes mediate both the recruitment of clathrin to membranes and the recognition of sorting signals within the cytosolic tails of transmembrane cargo molecules. This is AP-1 complex subunit beta-1 (Ap1b1) from Rattus norvegicus (Rat).